Reading from the N-terminus, the 176-residue chain is Oleosin Ara h 14.0101 (176 aa).

Alanine 2 is modified (N-acetylalanine; alternate). Helical transmembrane passes span 50-80 (IIAVLVGVPTGGTLLLLSGLSLLGTIIGLAI) and 95-117 (AVVTIGLAVTGILTAGACGLTGL). The tract at residues 157–176 (TKDAGQQIQTKAQDVKRSSS) is disordered.

Belongs to the oleosin family. As to quaternary structure, homodimer. Forms oligomers. In terms of tissue distribution, expressed in seeds (at protein level). Not expressed in leaves.

The protein resides in the lipid droplet. The protein localises to the membrane. May have a structural role to stabilize the lipid body during desiccation of the seed by preventing coalescence of the oil. Probably interacts with both lipid and phospholipid moieties of lipid bodies. May also provide recognition signals for specific lipase anchorage in lipolysis during seedling growth. In Arachis hypogaea (Peanut), this protein is Oleosin Ara h 14.0101.